The following is a 1420-amino-acid chain: DNA-directed RNA polymerase subunit beta' (1420 aa).

Residues cysteine 72, cysteine 74, cysteine 87, and cysteine 90 each coordinate Zn(2+). Mg(2+)-binding residues include aspartate 462, aspartate 464, and aspartate 466. Residues cysteine 816, cysteine 896, cysteine 903, and cysteine 906 each coordinate Zn(2+).

This sequence belongs to the RNA polymerase beta' chain family. The RNAP catalytic core consists of 2 alpha, 1 beta, 1 beta' and 1 omega subunit. When a sigma factor is associated with the core the holoenzyme is formed, which can initiate transcription. Mg(2+) serves as cofactor. The cofactor is Zn(2+).

The enzyme catalyses RNA(n) + a ribonucleoside 5'-triphosphate = RNA(n+1) + diphosphate. Functionally, DNA-dependent RNA polymerase catalyzes the transcription of DNA into RNA using the four ribonucleoside triphosphates as substrates. The chain is DNA-directed RNA polymerase subunit beta' from Blochmanniella floridana.